We begin with the raw amino-acid sequence, 31 residues long: Cyclotide vinc-B (31 aa).

Residues 1–31 (GSIPACGESCFKGKCYTPGCTCSKYPLCAKN) constitute a cross-link (cyclopeptide (Gly-Asn)). Disulfide bonds link cysteine 6/cysteine 20, cysteine 10/cysteine 22, and cysteine 15/cysteine 28.

This sequence belongs to the cyclotide family. Post-translationally, this is a cyclic peptide.

Functionally, probably participates in a plant defense mechanism. The polypeptide is Cyclotide vinc-B (Viola inconspicua).